The chain runs to 434 residues: Eukaryotic translation initiation factor 3 subunit E (434 aa).

Residues 219 to 392 enclose the PCI domain; it reads FFNHPKGRDL…GHVVMGTQPL (174 aa).

This sequence belongs to the eIF-3 subunit E family. Component of the eukaryotic translation initiation factor 3 (eIF-3) complex. The eIF-3 complex interacts with pix. Interacts with mxt.

It localises to the cytoplasm. In terms of biological role, component of the eukaryotic translation initiation factor 3 (eIF-3) complex, which is involved in protein synthesis of a specialized repertoire of mRNAs and, together with other initiation factors, stimulates binding of mRNA and methionyl-tRNAi to the 40S ribosome. The eIF-3 complex specifically targets and initiates translation of a subset of mRNAs involved in cell proliferation. The chain is Eukaryotic translation initiation factor 3 subunit E (eIF3-S6) from Drosophila persimilis (Fruit fly).